Reading from the N-terminus, the 194-residue chain is Cell division protein SepF (194 aa).

Disordered stretches follow at residues 35–54 (DHRS…DSSP) and 159–194 (SAPS…AGGL).

It belongs to the SepF family. Homodimer. Interacts with FtsZ.

It is found in the cytoplasm. In terms of biological role, cell division protein that is part of the divisome complex and is recruited early to the Z-ring. Probably stimulates Z-ring formation, perhaps through the cross-linking of FtsZ protofilaments. Its function overlaps with FtsA. The sequence is that of Cell division protein SepF from Prochlorococcus marinus (strain MIT 9313).